The following is a 384-amino-acid chain: Ferrochelatase, mitochondrial (384 aa).

Cys156 lines the [2Fe-2S] cluster pocket. Catalysis depends on residues His190 and Asn343. [2Fe-2S] cluster contacts are provided by Cys363, Cys366, and Cys371.

It belongs to the ferrochelatase family. As to quaternary structure, homodimer. Homotetramer. Requires [2Fe-2S] cluster as cofactor.

It is found in the mitochondrion inner membrane. The catalysed reaction is heme b + 2 H(+) = protoporphyrin IX + Fe(2+). Its pathway is porphyrin-containing compound metabolism; protoheme biosynthesis; protoheme from protoporphyrin-IX: step 1/1. In terms of biological role, catalyzes the ferrous insertion into protoporphyrin IX. Terminal enzyme in heme biosynthesis. Contains four conserved cysteines that function as cluster ligands and play a crucial role in maintaining protein structure. The polypeptide is Ferrochelatase, mitochondrial (Drosophila melanogaster (Fruit fly)).